A 606-amino-acid polypeptide reads, in one-letter code: UvrABC system protein C (606 aa).

Residues 18-96 (SQPGVYRMMN…IKSLNPRYNI (79 aa)) form the GIY-YIG domain. The UVR domain maps to 205 to 240 (TEVLKSITRKMHEAAEEQEYEQAALFRDQIQSLRKI).

This sequence belongs to the UvrC family. In terms of assembly, interacts with UvrB in an incision complex.

The protein resides in the cytoplasm. Its function is as follows. The UvrABC repair system catalyzes the recognition and processing of DNA lesions. UvrC both incises the 5' and 3' sides of the lesion. The N-terminal half is responsible for the 3' incision and the C-terminal half is responsible for the 5' incision. This is UvrABC system protein C from Nitrosospira multiformis (strain ATCC 25196 / NCIMB 11849 / C 71).